Here is a 615-residue protein sequence, read N- to C-terminus: RNA polymerase sigma factor RpoD (615 aa).

Residues 177–215 (APTATHVGSELSQEDLDDDEDEDEEDGDDDAADDDNSID) form a disordered region. Residues 188–214 (SQEDLDDDEDEDEEDGDDDAADDDNSI) are compositionally biased toward acidic residues. The interval 381-451 (MVEANLRLVI…TRSIADQART (71 aa)) is sigma-70 factor domain-2. Positions 405–408 (DLIQ) match the Interaction with polymerase core subunit RpoC motif. The segment at 460–536 (ETINKLNRIS…DTTLELPLDS (77 aa)) is sigma-70 factor domain-3. The tract at residues 549 to 602 (VLAGLTAREAKVLRMRFGIDMNTDHTLEEVGKQFDVTRERIRQIEAKALRKLRH) is sigma-70 factor domain-4. The segment at residues 575 to 594 (LEEVGKQFDVTRERIRQIEA) is a DNA-binding region (H-T-H motif).

Belongs to the sigma-70 factor family. RpoD/SigA subfamily. In terms of assembly, interacts transiently with the RNA polymerase catalytic core.

It localises to the cytoplasm. Its function is as follows. Sigma factors are initiation factors that promote the attachment of RNA polymerase to specific initiation sites and are then released. This sigma factor is the primary sigma factor during exponential growth. The sequence is that of RNA polymerase sigma factor RpoD from Salmonella typhi.